The sequence spans 154 residues: Deoxyuridine 5'-triphosphate nucleotidohydrolase (154 aa).

Substrate contacts are provided by residues 64-66, N77, 81-83, and K91; these read RSG and TID.

The protein belongs to the dUTPase family. Homotrimer. Requires Mg(2+) as cofactor.

The enzyme catalyses dUTP + H2O = dUMP + diphosphate + H(+). The protein operates within pyrimidine metabolism; dUMP biosynthesis; dUMP from dCTP (dUTP route): step 2/2. Functionally, this enzyme is involved in nucleotide metabolism: it produces dUMP, the immediate precursor of thymidine nucleotides and it decreases the intracellular concentration of dUTP so that uracil cannot be incorporated into DNA. The polypeptide is Deoxyuridine 5'-triphosphate nucleotidohydrolase (Mycobacterium avium (strain 104)).